A 365-amino-acid chain; its full sequence is Mitogen-activated protein kinase HOG1 (365 aa).

One can recognise a Protein kinase domain in the interval 20-306; that stretch reads YSDLQPVGMG…ATNALAHEYL (287 aa). ATP-binding positions include 26–34 and K49; that span reads VGMGAFGLV. D148 serves as the catalytic Proton acceptor. A TXY motif is present at residues 178–180; it reads TGY.

This sequence belongs to the protein kinase superfamily. Ser/Thr protein kinase family. MAP kinase subfamily. HOG1 sub-subfamily. Requires Mg(2+) as cofactor.

The protein resides in the cytoplasm. The protein localises to the nucleus. The catalysed reaction is L-seryl-[protein] + ATP = O-phospho-L-seryl-[protein] + ADP + H(+). It carries out the reaction L-threonyl-[protein] + ATP = O-phospho-L-threonyl-[protein] + ADP + H(+). Its function is as follows. Proline-directed serine/threonine-protein kinase involved in a signal transduction pathway that is activated by changes in the osmolarity of the extracellular environment. Controls osmotic regulation of transcription of target genes. Involved in environmental stress response, hyphal growth, conidiation and possibly secondary metabolism such as ustiloxin biosynthesis or the biosynthesis of other phytotoxic compounds that are inhibitory to rice shoot growth during seed germination. Plays a key role in responses to cell wall and membrane stresses but not oxidative stress. The protein is Mitogen-activated protein kinase HOG1 of Ustilaginoidea virens (Rice false smut fungus).